We begin with the raw amino-acid sequence, 341 residues long: Protein DOWNY MILDEW RESISTANCE 6 (341 aa).

A Fe2OG dioxygenase domain is found at 188 to 288 (QGQHMAVNYY…RLSVASFLCP (101 aa)). The Fe cation site is built by His-212, Asp-214, and His-269. Arg-279 is a 2-oxoglutarate binding site.

This sequence belongs to the iron/ascorbate-dependent oxidoreductase family. The cofactor is Fe(2+).

It carries out the reaction salicylate + NADH + O2 + H(+) = 2,3-dihydroxybenzoate + NAD(+) + H2O. Functionally, converts salicylic acid (SA) to 2,3-dihydroxybenzoic acid (2,3-DHBA). Suppressor of immunity. Regulates negatively defense associated genes expression (e.g. PR-1, PR-2, and PR-5). Negative regulator of defense against Hyaloperonospora arabidopsidis. Its function is as follows. (Microbial infection) Required for susceptibility to the downy mildew pathogen Hyaloperonospora arabidopsidis. (Microbial infection) Required for susceptibility to Pseudomonas syringae pv. tomato DC3000. In terms of biological role, (Microbial infection) Required for susceptibility to the oomycete Phytophthora capsici. The protein is Protein DOWNY MILDEW RESISTANCE 6 of Arabidopsis thaliana (Mouse-ear cress).